A 279-amino-acid polypeptide reads, in one-letter code: Thymidylate synthase (279 aa).

133-134 (RR) contributes to the dUMP binding site. Residue Cys-154 is the Nucleophile of the active site. DUMP is bound by residues 178 to 181 (RSND), Asn-189, and 219 to 221 (HIY). Residue Asp-181 participates in (6R)-5,10-methylene-5,6,7,8-tetrahydrofolate binding. Residue Ala-278 coordinates (6R)-5,10-methylene-5,6,7,8-tetrahydrofolate.

It belongs to the thymidylate synthase family. Bacterial-type ThyA subfamily. As to quaternary structure, homodimer.

Its subcellular location is the cytoplasm. It carries out the reaction dUMP + (6R)-5,10-methylene-5,6,7,8-tetrahydrofolate = 7,8-dihydrofolate + dTMP. The protein operates within pyrimidine metabolism; dTTP biosynthesis. Catalyzes the reductive methylation of 2'-deoxyuridine-5'-monophosphate (dUMP) to 2'-deoxythymidine-5'-monophosphate (dTMP) while utilizing 5,10-methylenetetrahydrofolate (mTHF) as the methyl donor and reductant in the reaction, yielding dihydrofolate (DHF) as a by-product. This enzymatic reaction provides an intracellular de novo source of dTMP, an essential precursor for DNA biosynthesis. The protein is Thymidylate synthase of Streptococcus agalactiae serotype Ia (strain ATCC 27591 / A909 / CDC SS700).